The chain runs to 367 residues: uncharacterized protein (367 aa).

Helical transmembrane passes span 35 to 55, 61 to 81, 92 to 112, and 113 to 133; these read YVYD…IILW, LALF…TLLV, EVAD…TAAG, and LMFS…PLFL. Disordered regions lie at residues 177 to 220, 249 to 283, and 296 to 367; these read KLPK…PASI, SNIK…YYTP, and GDIS…SRPK. Over residues 257-274 the composition is skewed to polar residues; it reads NTKSILHTPLNRRSPSGS. The span at 302–312 shows a compositional bias: low complexity; sequence SSSSTSSKTST. Over residues 323 to 342 the composition is skewed to basic and acidic residues; that stretch reads SRSERNARHHRNKEDHRQNQ. Residues 357–367 show a composition bias toward basic residues; the sequence is PRRKKYRSRPK.

The protein belongs to the chlamydial CPn_0443/CT_005/TC_0273 family.

The protein localises to the cell membrane. This is an uncharacterized protein from Chlamydia muridarum (strain MoPn / Nigg).